A 121-amino-acid chain; its full sequence is Colipase-like protein 1 (121 aa).

The first 23 residues, 1 to 23 (MMLPQWLLLLFLLFFFLFLLTRG), serve as a signal peptide directing secretion. 5 disulfide bridges follow: Cys-39/Cys-50, Cys-45/Cys-61, Cys-49/Cys-83, Cys-71/Cys-91, and Cys-85/Cys-107.

The protein belongs to the colipase family. In terms of tissue distribution, exclusively expressed in epididymis, in the corpus region.

The protein resides in the secreted. This is Colipase-like protein 1 (CLPSL1) from Homo sapiens (Human).